A 319-amino-acid polypeptide reads, in one-letter code: MTEPLRIVFAGTPEFAAEHLKALLDSPYQIVAVYTQPDRPAGRGQKLMPSPVKQLALENDIPVLQPPTLRNAEAQAELAALKPDLMVVVAYGLILPQAVLDIPRLGCINSHASLLPRWRGAAPIQRAVQAGDAQSGVTVMRMEAGLDTGPMLLKVSTPISAEDTGGSLHDRLAEMGPPAVLQAIEGLAAGTLEGEVQDDSLATYAHKLNKDEARIDWSRPAVELERLVRAFNPWPICHSSLNGEALKVLAATLAEGKGAPGEILGASKDGLIVACGEQALCLTRLQLPGGKALNFSDLFNSRREKFAIGTVLGQTADAQ.

113 to 116 contacts (6S)-5,6,7,8-tetrahydrofolate; that stretch reads SLLP.

This sequence belongs to the Fmt family.

It carries out the reaction L-methionyl-tRNA(fMet) + (6R)-10-formyltetrahydrofolate = N-formyl-L-methionyl-tRNA(fMet) + (6S)-5,6,7,8-tetrahydrofolate + H(+). Its function is as follows. Attaches a formyl group to the free amino group of methionyl-tRNA(fMet). The formyl group appears to play a dual role in the initiator identity of N-formylmethionyl-tRNA by promoting its recognition by IF2 and preventing the misappropriation of this tRNA by the elongation apparatus. The polypeptide is Methionyl-tRNA formyltransferase (Pseudomonas fluorescens (strain ATCC BAA-477 / NRRL B-23932 / Pf-5)).